Here is a 97-residue protein sequence, read N- to C-terminus: MKRICSIYRSPKRNEMYLYVLKSDVLKRVPPELMVAFGKPVHAFDLVLSPERALSREDINVVLENLDSQGYHLQMPPAEDDYIEHLPEELLRRNDPM.

Positions 3–87 (RICSIYRSPK…AEDDYIEHLP (85 aa)) constitute a YcgL domain.

This is YcgL domain-containing protein Psyr_1564 from Pseudomonas syringae pv. syringae (strain B728a).